The chain runs to 352 residues: Phosphoribosylformylglycinamidine cyclo-ligase (352 aa).

Belongs to the AIR synthase family.

The protein localises to the cytoplasm. It carries out the reaction 2-formamido-N(1)-(5-O-phospho-beta-D-ribosyl)acetamidine + ATP = 5-amino-1-(5-phospho-beta-D-ribosyl)imidazole + ADP + phosphate + H(+). It functions in the pathway purine metabolism; IMP biosynthesis via de novo pathway; 5-amino-1-(5-phospho-D-ribosyl)imidazole from N(2)-formyl-N(1)-(5-phospho-D-ribosyl)glycinamide: step 2/2. The protein is Phosphoribosylformylglycinamidine cyclo-ligase of Azoarcus sp. (strain BH72).